Consider the following 92-residue polypeptide: Large ribosomal subunit protein bL31 (92 aa).

This sequence belongs to the bacterial ribosomal protein bL31 family. Type A subfamily. In terms of assembly, part of the 50S ribosomal subunit.

In terms of biological role, binds the 23S rRNA. The protein is Large ribosomal subunit protein bL31 of Mesoplasma florum (strain ATCC 33453 / NBRC 100688 / NCTC 11704 / L1) (Acholeplasma florum).